The following is a 664-amino-acid chain: Zinc finger protein 710 (664 aa).

Residues Lys110 and Lys113 each participate in a glycyl lysine isopeptide (Lys-Gly) (interchain with G-Cter in SUMO2) cross-link. The disordered stretch occupies residues 121-141 (VYEVSVPGDDKDAGPAEAPAE). 3 consecutive C2H2-type zinc fingers follow at residues 295–317 (WQCR…ILGH), 323–345 (HSCP…LLTH), and 351–373 (HKCQ…MLLH). Residue Lys377 forms a Glycyl lysine isopeptide (Lys-Gly) (interchain with G-Cter in SUMO2) linkage. 8 C2H2-type zinc fingers span residues 379-401 (YSCH…EVKH), 407-429 (HVCV…LASH), 435-457 (YQCL…MLKH), 463-485 (FVCT…SLTH), 491-513 (FKCE…MLIH), 519-541 (YQCH…MIVH), 547-569 (FKCK…MHLH), and 575-598 (FKCP…KVKH).

The protein belongs to the krueppel C2H2-type zinc-finger protein family.

The protein localises to the nucleus. May be involved in transcriptional regulation. The polypeptide is Zinc finger protein 710 (ZNF710) (Homo sapiens (Human)).